The sequence spans 85 residues: Antitoxin VapB43 (85 aa).

A disordered region spans residues 37 to 60 (GLNPPKPQAAGRYRVQPSGKGGLR).

In terms of biological role, antitoxin component of a type II toxin-antitoxin (TA) system. In Mycobacterium tuberculosis (strain CDC 1551 / Oshkosh), this protein is Antitoxin VapB43 (vapB43).